An 859-amino-acid polypeptide reads, in one-letter code: Cadherin-related family member 1 (859 aa).

Positions 1-21 (MRRGPQVALVLGLLCIYLAQA) are cleaved as a signal peptide. Residues 22–701 (NFAPHFFDNG…LIQTKDNPMK (680 aa)) are Extracellular-facing. Cadherin domains follow at residues 36-135 (NGNM…APRF), 136-247 (LQEP…APIF), 248-354 (VGTP…PPTF), 360-473 (PQNK…VPKF), 474-577 (TSHY…YPQF), and 569-691 (DVND…MAAF). Asn-58 and Asn-89 each carry an N-linked (GlcNAc...) asparagine glycan. N-linked (GlcNAc...) asparagine glycans are attached at residues Asn-288 and Asn-297. The helical transmembrane segment at 702 to 722 (AVGVLAGVMAIVVAITVLIST) threads the bilayer. Topologically, residues 723-859 (ATFWRNKKSN…KKSLGNKAYV (137 aa)) are cytoplasmic. The tract at residues 789-859 (PPRAPALPPP…KKSLGNKAYV (71 aa)) is disordered. Positions 790–800 (PRAPALPPPPK) are enriched in pro residues. The span at 802 to 816 (ASSTVAQQTVPTVSG) shows a compositional bias: polar residues. Positions 817 to 827 (SLTPQPSQQLP) are enriched in low complexity.

Interacts with PROM1. In terms of processing, undergoes proteolytic cleavage; produces a soluble 95 kDa N-terminal fragment and a 25 kDa cell-associated C-terminal fragment. In terms of tissue distribution, expressed in the retina. Strongly expressed by the mitral and tufted cells in the main and accessory olfactory bulbs. Also expressed in the septum and olfactory cortex. Weakly expressed in the triangular septal nucleus and piriform cortex.

It is found in the cell membrane. Functionally, potential calcium-dependent cell-adhesion protein. May be required for the structural integrity of the outer segment (OS) of photoreceptor cells. In Rattus norvegicus (Rat), this protein is Cadherin-related family member 1 (Cdhr1).